The following is a 117-amino-acid chain: Large ribosomal subunit protein bL20 (117 aa).

This sequence belongs to the bacterial ribosomal protein bL20 family.

In terms of biological role, binds directly to 23S ribosomal RNA and is necessary for the in vitro assembly process of the 50S ribosomal subunit. It is not involved in the protein synthesizing functions of that subunit. This is Large ribosomal subunit protein bL20 from Aliivibrio fischeri (strain ATCC 700601 / ES114) (Vibrio fischeri).